Consider the following 360-residue polypeptide: Phospho-N-acetylmuramoyl-pentapeptide-transferase (360 aa).

The next 10 helical transmembrane spans lie at 25–45 (RAILSVLTALVLSLWLGPTLI), 73–93 (TMGGVLILAAVLGSSLLWADL), 97–117 (YVWVVLLVTTGFGIVGFVDDY), 128–148 (LIAKWKYFWQSVIASVAAVYL), 168–188 (VMPQLGMLYMLMAYFVIVGTS), 199–219 (GLAIMPTIMVAAALGIFAYVS), 236–256 (TAELLVVCTAIVGAGLGFLWF), 262–282 (LVFMGDVGSLALGAALGIIAI), 288–308 (LVLFIMGGVFVMETLSVMLQV), and 338–358 (VIVRFWILSLIFVLIGLATLK).

The protein belongs to the glycosyltransferase 4 family. MraY subfamily. It depends on Mg(2+) as a cofactor.

The protein localises to the cell inner membrane. The enzyme catalyses UDP-N-acetyl-alpha-D-muramoyl-L-alanyl-gamma-D-glutamyl-meso-2,6-diaminopimeloyl-D-alanyl-D-alanine + di-trans,octa-cis-undecaprenyl phosphate = di-trans,octa-cis-undecaprenyl diphospho-N-acetyl-alpha-D-muramoyl-L-alanyl-D-glutamyl-meso-2,6-diaminopimeloyl-D-alanyl-D-alanine + UMP. The protein operates within cell wall biogenesis; peptidoglycan biosynthesis. Catalyzes the initial step of the lipid cycle reactions in the biosynthesis of the cell wall peptidoglycan: transfers peptidoglycan precursor phospho-MurNAc-pentapeptide from UDP-MurNAc-pentapeptide onto the lipid carrier undecaprenyl phosphate, yielding undecaprenyl-pyrophosphoryl-MurNAc-pentapeptide, known as lipid I. The protein is Phospho-N-acetylmuramoyl-pentapeptide-transferase of Idiomarina loihiensis (strain ATCC BAA-735 / DSM 15497 / L2-TR).